A 405-amino-acid chain; its full sequence is Threonine synthase (405 aa).

Lys104 is subject to N6-(pyridoxal phosphate)lysine. Residues Asn130, 231-235, and Thr369 each bind pyridoxal 5'-phosphate; that span reads GNAGN.

This sequence belongs to the threonine synthase family. As to quaternary structure, homotrimer. Pyridoxal 5'-phosphate serves as cofactor.

The catalysed reaction is O-phospho-L-homoserine + H2O = L-threonine + phosphate. The protein operates within amino-acid biosynthesis; L-threonine biosynthesis; L-threonine from L-aspartate: step 5/5. Its function is as follows. Catalyzes the gamma-elimination of phosphate from L-phosphohomoserine and the beta-addition of water to produce L-threonine. Does not catalyze the conversion of O-acetyl-L-homoserine into threonine. This chain is Threonine synthase (thrC), found in Methanosarcina acetivorans (strain ATCC 35395 / DSM 2834 / JCM 12185 / C2A).